We begin with the raw amino-acid sequence, 200 residues long: Interferon lambda-2 (200 aa).

The signal sequence occupies residues 1–25 (MKLDMTGDCTPVLVLMAAVLTVTGA).

The protein belongs to the lambda interferon family.

It localises to the secreted. Its function is as follows. Cytokine with antiviral, antitumour and immunomodulatory activities. Plays a critical role in the antiviral host defense, predominantly in the epithelial tissues. Acts as a ligand for the heterodimeric class II cytokine receptor composed of IL10RB and IFNLR1, and receptor engagement leads to the activation of the JAK/STAT signaling pathway resulting in the expression of IFN-stimulated genes (ISG), which mediate the antiviral state. Has a restricted receptor distribution and therefore restricted targets: is primarily active in epithelial cells and this cell type-selective action is because of the epithelial cell-specific expression of its receptor IFNLR1. Seems not to be essential for early virus-activated host defense in vaginal infection, but plays an important role in Toll-like receptor (TLR)-induced antiviral defense. Plays a significant role in the antiviral immune defense in the intestinal epithelium. Exerts an immunomodulatory effect by up-regulating MHC class I antigen expression. The sequence is that of Interferon lambda-2 (IFNL2) from Homo sapiens (Human).